The primary structure comprises 143 residues: Large ribosomal subunit protein uL13 (143 aa).

This sequence belongs to the universal ribosomal protein uL13 family. In terms of assembly, part of the 50S ribosomal subunit.

This protein is one of the early assembly proteins of the 50S ribosomal subunit, although it is not seen to bind rRNA by itself. It is important during the early stages of 50S assembly. The chain is Large ribosomal subunit protein uL13 from Caldanaerobacter subterraneus subsp. tengcongensis (strain DSM 15242 / JCM 11007 / NBRC 100824 / MB4) (Thermoanaerobacter tengcongensis).